The following is a 422-amino-acid chain: Metallocarboxypeptidase A (422 aa).

The signal sequence occupies residues 1–17 (MRSVLSLALLAANVVTA). The propeptide at 18-112 (AVVSPFDYSG…FEAYSAGYAP (95 aa)) is activation peptide. A Peptidase M14 domain is found at 119 to 419 (SYHSYQDHIS…AGTVAMLKAV (301 aa)). Zn(2+) contacts are provided by His179 and Glu182. Substrate-binding positions include 179–182 (HARE), Arg237, and 254–255 (NR). Residues Cys248 and Cys271 are joined by a disulfide bond. Zn(2+) is bound at residue His309. Position 310–311 (310–311 (SY)) interacts with substrate. Catalysis depends on Glu385, which acts as the Proton donor/acceptor.

This sequence belongs to the peptidase M14 family. Requires Zn(2+) as cofactor.

The protein localises to the secreted. Its function is as follows. Extracellular metalloprotease that contributes to pathogenicity. The protein is Metallocarboxypeptidase A (MCPA) of Trichophyton tonsurans (Scalp ringworm fungus).